The primary structure comprises 147 residues: Hemoglobin subunit beta-3 (147 aa).

The 146-residue stretch at 2–147 folds into the Globin domain; the sequence is EWTDAERTAI…VTSALSRQYH (146 aa). His-63 and His-92 together coordinate heme b.

This sequence belongs to the globin family. As to quaternary structure, heterotetramer of two alpha chains and two beta chains. In terms of tissue distribution, red blood cells.

Its function is as follows. Involved in oxygen transport from gills to the various peripheral tissues. The chain is Hemoglobin subunit beta-3 (hbb3) from Muraena helena (Mediterranean moray).